A 45-amino-acid chain; its full sequence is Protein PsbN (45 aa).

The helical transmembrane segment at Phe12–Gly30 threads the bilayer.

It belongs to the PsbN family.

Its subcellular location is the plastid. It is found in the chloroplast thylakoid membrane. Functionally, may play a role in photosystem I and II biogenesis. The chain is Protein PsbN from Adiantum capillus-veneris (Maidenhair fern).